Here is a 465-residue protein sequence, read N- to C-terminus: Glutamate--tRNA ligase 1 (465 aa).

The short motif at 8 to 18 (PSPTGLMHLGN) is the 'HIGH' region element. Positions 249–253 (PLSKR) match the 'KMSKS' region motif. Residue Lys252 participates in ATP binding.

Belongs to the class-I aminoacyl-tRNA synthetase family. Glutamate--tRNA ligase type 1 subfamily. As to quaternary structure, monomer.

The protein localises to the cytoplasm. The catalysed reaction is tRNA(Glu) + L-glutamate + ATP = L-glutamyl-tRNA(Glu) + AMP + diphosphate. Its function is as follows. Catalyzes the attachment of glutamate to tRNA(Glu) in a two-step reaction: glutamate is first activated by ATP to form Glu-AMP and then transferred to the acceptor end of tRNA(Glu). This chain is Glutamate--tRNA ligase 1, found in Coxiella burnetii (strain CbuG_Q212) (Coxiella burnetii (strain Q212)).